We begin with the raw amino-acid sequence, 526 residues long: Chaperonin GroEL, chloroplastic (526 aa).

Residues 29–32 (TLGP), 86–90 (DGTTT), G412, 476–478 (DAA), and D492 each bind ATP.

Belongs to the chaperonin (HSP60) family. As to quaternary structure, forms a cylinder of 14 subunits composed of two heptameric rings stacked back-to-back. Interacts with the co-chaperonin GroES.

Its subcellular location is the plastid. The protein resides in the chloroplast. The enzyme catalyses ATP + H2O + a folded polypeptide = ADP + phosphate + an unfolded polypeptide.. Its function is as follows. Together with its co-chaperonin GroES, plays an essential role in assisting protein folding. The GroEL-GroES system forms a nano-cage that allows encapsulation of the non-native substrate proteins and provides a physical environment optimized to promote and accelerate protein folding. The polypeptide is Chaperonin GroEL, chloroplastic (Cyanidioschyzon merolae (strain NIES-3377 / 10D) (Unicellular red alga)).